A 233-amino-acid chain; its full sequence is Synaptogyrin-1 (233 aa).

An N-acetylmethionine modification is found at M1. Over 1-23 (MEGGAYGAGKAGGAFDPYTLVRQ) the chain is Cytoplasmic. The MARVEL domain maps to 20-173 (LVRQPHTILR…QAVLAFQRYQ (154 aa)). A helical transmembrane segment spans residues 24–44 (PHTILRVVSWLFSIVVFGSIV). Residues 45 to 71 (NEGYLNSASEGEEFCIYNRNPNACSYG) lie on the Lumenal side of the membrane. Residues 72 to 92 (VAVGVLAFLTCLLYLALDVYF) traverse the membrane as a helical segment. The Cytoplasmic portion of the chain corresponds to 93–103 (PQISSVKDRKK). Residues 104–124 (AVLSDIGVSAFWAFLWFVGFC) form a helical membrane-spanning segment. Residues 125–148 (YLANQWQVSKPKDNPLNEGTDAAR) are Lumenal-facing. Residues 149–169 (AAIAFSFFSIFTWAGQAVLAF) form a helical membrane-spanning segment. Topologically, residues 170-233 (QRYQIGADSA…EPQGYQSQGY (64 aa)) are cytoplasmic. Positions 194–233 (MPYAPYVEPTGPDPAGMGGTYQQPANTFDTEPQGYQSQGY) are disordered. Polar residues predominate over residues 213 to 233 (TYQQPANTFDTEPQGYQSQGY).

The protein belongs to the synaptogyrin family.

The protein localises to the cytoplasmic vesicle. The protein resides in the secretory vesicle. Its subcellular location is the synaptic vesicle membrane. It is found in the melanosome. Its function is as follows. May play a role in regulated exocytosis. Modulates the localization of synaptophysin/SYP into synaptic-like microvesicles and may therefore play a role in synaptic-like microvesicle formation and/or maturation. Involved in the regulation of short-term and long-term synaptic plasticity. The protein is Synaptogyrin-1 of Homo sapiens (Human).